Consider the following 670-residue polypeptide: DNA ligase (670 aa).

NAD(+) contacts are provided by residues 32–36, 81–82, and Glu114; these read DSEYD and SL. Residue Lys116 is the N6-AMP-lysine intermediate of the active site. NAD(+)-binding residues include Arg137, Glu174, Lys291, and Lys315. Cys409, Cys412, Cys427, and Cys433 together coordinate Zn(2+). A BRCT domain is found at 592 to 670; sequence ASENLFKDKT…EEEFLAQITR (79 aa).

It belongs to the NAD-dependent DNA ligase family. LigA subfamily. Mg(2+) is required as a cofactor. The cofactor is Mn(2+).

It catalyses the reaction NAD(+) + (deoxyribonucleotide)n-3'-hydroxyl + 5'-phospho-(deoxyribonucleotide)m = (deoxyribonucleotide)n+m + AMP + beta-nicotinamide D-nucleotide.. Its function is as follows. DNA ligase that catalyzes the formation of phosphodiester linkages between 5'-phosphoryl and 3'-hydroxyl groups in double-stranded DNA using NAD as a coenzyme and as the energy source for the reaction. It is essential for DNA replication and repair of damaged DNA. This chain is DNA ligase, found in Haemophilus influenzae (strain ATCC 51907 / DSM 11121 / KW20 / Rd).